The sequence spans 226 residues: MRIDIITVLPELLRSPFEASIMKRAIDKGLVEVHFHNLRDYTTNKQKSVDDYQFGGGAGMVMMIQPIDDCITHLKSEREYDEIIYMSPDGETLNQKMANKMSMYENIIILCGHYKGVDQRVRDHFITKEISIGDYVLSGGELGALVLSDALIRLIPGVLSDETSALTDSFQDNLLSGPIYTRPADYKGWKVPEVLTSGHAAKIEKWREDAAYEHTKNRRPDLLEEH.

Residues Gly-112 and 132 to 137 each bind S-adenosyl-L-methionine; that span reads IGDYVL.

This sequence belongs to the RNA methyltransferase TrmD family. As to quaternary structure, homodimer.

It is found in the cytoplasm. It carries out the reaction guanosine(37) in tRNA + S-adenosyl-L-methionine = N(1)-methylguanosine(37) in tRNA + S-adenosyl-L-homocysteine + H(+). Its function is as follows. Specifically methylates guanosine-37 in various tRNAs. This is tRNA (guanine-N(1)-)-methyltransferase from Flavobacterium johnsoniae (strain ATCC 17061 / DSM 2064 / JCM 8514 / BCRC 14874 / CCUG 350202 / NBRC 14942 / NCIMB 11054 / UW101) (Cytophaga johnsonae).